The following is a 20-amino-acid chain: Unknown protein NF040 from 2D-PAGE (20 aa).

One can recognise a TCTP domain in the interval 1 to 20 (MKVYTDIFTRDEFLSDSYPM).

Belongs to the TCTP family.

The chain is Unknown protein NF040 from 2D-PAGE from Naegleria fowleri (Brain eating amoeba).